The sequence spans 272 residues: Putative phosphoenolpyruvate synthase regulatory protein (272 aa).

152 to 159 (GVSRCGKT) serves as a coordination point for ADP.

Belongs to the pyruvate, phosphate/water dikinase regulatory protein family. PSRP subfamily.

The catalysed reaction is [pyruvate, water dikinase] + ADP = [pyruvate, water dikinase]-phosphate + AMP + H(+). It carries out the reaction [pyruvate, water dikinase]-phosphate + phosphate + H(+) = [pyruvate, water dikinase] + diphosphate. In terms of biological role, bifunctional serine/threonine kinase and phosphorylase involved in the regulation of the phosphoenolpyruvate synthase (PEPS) by catalyzing its phosphorylation/dephosphorylation. The protein is Putative phosphoenolpyruvate synthase regulatory protein of Pseudomonas putida (strain ATCC 47054 / DSM 6125 / CFBP 8728 / NCIMB 11950 / KT2440).